The sequence spans 718 residues: Catalase-peroxidase 1 (718 aa).

The tryptophyl-tyrosyl-methioninium (Trp-Tyr) (with M-247) cross-link spans 93-221 (WHSAGTYRIA…LAAVMMGLIY (129 aa)). Catalysis depends on His-94, which acts as the Proton acceptor. A cross-link (tryptophyl-tyrosyl-methioninium (Tyr-Met) (with W-93)) is located at residues 221 to 247 (YVNPEGVDGNPDPLKTAQDMRVTFARM). Residue His-262 coordinates heme b.

The protein belongs to the peroxidase family. Peroxidase/catalase subfamily. Homodimer or homotetramer. Heme b is required as a cofactor. Post-translationally, formation of the three residue Trp-Tyr-Met cross-link is important for the catalase, but not the peroxidase activity of the enzyme.

It carries out the reaction H2O2 + AH2 = A + 2 H2O. It catalyses the reaction 2 H2O2 = O2 + 2 H2O. In terms of biological role, bifunctional enzyme with both catalase and broad-spectrum peroxidase activity. This Shewanella amazonensis (strain ATCC BAA-1098 / SB2B) protein is Catalase-peroxidase 1.